A 387-amino-acid polypeptide reads, in one-letter code: Galactokinase (387 aa).

Glu33–Asp36 serves as a coordination point for substrate. ATP is bound by residues Ser67 and Gly123–Ser129. The Mg(2+) site is built by Ser129 and Glu161. The Proton acceptor role is filled by Asp173. Residue Tyr223 participates in substrate binding.

The protein belongs to the GHMP kinase family. GalK subfamily.

Its subcellular location is the cytoplasm. The catalysed reaction is alpha-D-galactose + ATP = alpha-D-galactose 1-phosphate + ADP + H(+). It functions in the pathway carbohydrate metabolism; galactose metabolism. In terms of biological role, catalyzes the transfer of the gamma-phosphate of ATP to D-galactose to form alpha-D-galactose-1-phosphate (Gal-1-P). The sequence is that of Galactokinase from Lacticaseibacillus casei (Lactobacillus casei).